The following is a 376-amino-acid chain: Actin, cytoplasmic (376 aa).

This sequence belongs to the actin family.

It is found in the cytoplasm. It localises to the cytoskeleton. It catalyses the reaction ATP + H2O = ADP + phosphate + H(+). Actins are highly conserved proteins that are involved in various types of cell motility and are ubiquitously expressed in all eukaryotic cells. This chain is Actin, cytoplasmic, found in Tetrahymena pyriformis.